The primary structure comprises 302 residues: Geranylgeranyl diphosphate synthase (302 aa).

Isopentenyl diphosphate contacts are provided by Lys-53, Arg-56, and His-87. 2 residues coordinate Mg(2+): Asp-94 and Asp-100. Arg-105 contributes to the (2E,6E)-farnesyl diphosphate binding site. Isopentenyl diphosphate is bound at residue Arg-106. (2E,6E)-farnesyl diphosphate is bound by residues Lys-189, Thr-190, and Gln-227.

This sequence belongs to the FPP/GGPP synthase family. Mg(2+) serves as cofactor.

The enzyme catalyses isopentenyl diphosphate + (2E,6E)-farnesyl diphosphate = (2E,6E,10E)-geranylgeranyl diphosphate + diphosphate. It participates in isoprenoid biosynthesis; geranylgeranyl diphosphate biosynthesis; geranylgeranyl diphosphate from farnesyl diphosphate and isopentenyl diphosphate: step 1/1. Its function is as follows. Catalyzes the condensation of farnesyl diphosphate (FPP) and isopentenyl diphosphate (IPP) to yield geranylgeranyl diphosphate (GGPP) needed for biosynthesis of carotenoids and diterpenes. In Pantoea ananas (Erwinia uredovora), this protein is Geranylgeranyl diphosphate synthase (crtE).